Here is a 351-residue protein sequence, read N- to C-terminus: D-alanine--D-alanine ligase (351 aa).

In terms of domain architecture, ATP-grasp spans 141–349 (KAAFSAAGLP…ISQLVARLIE (209 aa)). 176–231 (ETQLGYPCFIKPANLGSSVGISKAYDKKELLNGLDLAAQLDSRIVVEKNIKARELE) contributes to the ATP binding site. Mg(2+) contacts are provided by D302, E316, and N318.

The protein belongs to the D-alanine--D-alanine ligase family. It depends on Mg(2+) as a cofactor. Requires Mn(2+) as cofactor.

The protein localises to the cytoplasm. The catalysed reaction is 2 D-alanine + ATP = D-alanyl-D-alanine + ADP + phosphate + H(+). It functions in the pathway cell wall biogenesis; peptidoglycan biosynthesis. Cell wall formation. The sequence is that of D-alanine--D-alanine ligase from Prochlorococcus marinus (strain SARG / CCMP1375 / SS120).